The sequence spans 644 residues: Macrolide export ATP-binding/permease protein MacB (644 aa).

The ABC transporter domain maps to isoleucine 4–alanine 242. Glycine 40–serine 47 is a binding site for ATP. 4 consecutive transmembrane segments (helical) span residues leucine 270–glycine 290, isoleucine 524–valine 544, leucine 574–phenylalanine 594, and alanine 607–methionine 627.

Belongs to the ABC transporter superfamily. Macrolide exporter (TC 3.A.1.122) family. In terms of assembly, homodimer.

It is found in the cell inner membrane. Non-canonical ABC transporter that contains transmembrane domains (TMD), which form a pore in the inner membrane, and an ATP-binding domain (NBD), which is responsible for energy generation. Confers resistance against macrolides. This is Macrolide export ATP-binding/permease protein MacB from Neisseria meningitidis serogroup A / serotype 4A (strain DSM 15465 / Z2491).